We begin with the raw amino-acid sequence, 462 residues long: Cytochrome P450 20A1 (462 aa).

The chain crosses the membrane as a helical span at residues 4-24; it reads FAIFAVTFLLALVGAVLYLYP. Cys409 is a binding site for heme.

It belongs to the cytochrome P450 family. It depends on heme as a cofactor.

It is found in the membrane. The polypeptide is Cytochrome P450 20A1 (Cyp20a1) (Rattus norvegicus (Rat)).